A 149-amino-acid chain; its full sequence is Aspartate 1-decarboxylase (149 aa).

The active-site Schiff-base intermediate with substrate; via pyruvic acid is serine 25. Pyruvic acid (Ser) is present on serine 25. Residue threonine 57 coordinates substrate. The active-site Proton donor is the tyrosine 58. 73–75 serves as a coordination point for substrate; the sequence is GAA. The disordered stretch occupies residues 119–149; sequence GDPAAALPGDPSSLRGDVLDPAGARGLGGGA.

It belongs to the PanD family. As to quaternary structure, heterooctamer of four alpha and four beta subunits. Pyruvate serves as cofactor. Is synthesized initially as an inactive proenzyme, which is activated by self-cleavage at a specific serine bond to produce a beta-subunit with a hydroxyl group at its C-terminus and an alpha-subunit with a pyruvoyl group at its N-terminus.

It localises to the cytoplasm. It carries out the reaction L-aspartate + H(+) = beta-alanine + CO2. The protein operates within cofactor biosynthesis; (R)-pantothenate biosynthesis; beta-alanine from L-aspartate: step 1/1. In terms of biological role, catalyzes the pyruvoyl-dependent decarboxylation of aspartate to produce beta-alanine. The chain is Aspartate 1-decarboxylase from Parafrankia sp. (strain EAN1pec).